We begin with the raw amino-acid sequence, 464 residues long: Agamous-like MADS-box protein AGL92 (464 aa).

An MADS-box domain is found at 1–60 (MRTKTKLVLIPDRHFRRATFRKRNAGIRKKLHELTTLCDIKACAVIYSPFENPTVWPSTE). Residues 85–114 (ETFLRDQITKEQNKLESLRRENRETQLKHF) adopt a coiled-coil conformation. The tract at residues 443–464 (TSTGHMPSTTTTTTNNNNNNNV) is disordered. Positions 451-464 (TTTTTTNNNNNNNV) are enriched in low complexity.

In terms of assembly, interacts with AGL62.

Its subcellular location is the nucleus. Functionally, putative transcription factor. The chain is Agamous-like MADS-box protein AGL92 (AGL92) from Arabidopsis thaliana (Mouse-ear cress).